The chain runs to 65 residues: Large ribosomal subunit protein bL35 (65 aa).

Belongs to the bacterial ribosomal protein bL35 family.

The sequence is that of Large ribosomal subunit protein bL35 from Borrelia duttonii (strain Ly).